The following is a 224-amino-acid chain: Transcription cofactor HES-6 (224 aa).

The disordered stretch occupies residues 1 to 31 (MAPPAAPGRDRVGREDEDGWETRGDRKARKP). The segment covering 8–25 (GRDRVGREDEDGWETRGD) has biased composition (basic and acidic residues). Positions 25-77 (DRKARKPLVEKKRRARINESLQELRLLLAGAEVQAKLENAEVLELTVRRVQGV) constitute a bHLH domain. Residues 96-129 (FAAGYIQCMHEVHTFVSTCQAIDATVAAELLNHL) enclose the Orange domain. A compositionally biased stretch (low complexity) spans 147 to 161 (DALAGPPRAPGRSGW). Residues 147 to 205 (DALAGPPRAPGRSGWPAGGAPGSPIPSPPGPGDDLCSDLEEAPEAELSQAPAEGPDLVP) form a disordered region. A compositionally biased stretch (acidic residues) spans 181-190 (LCSDLEEAPE). The WRPW motif signature appears at 221–224 (WRPW).

As to quaternary structure, transcription repression requires formation of a complex with a corepressor protein of the Groucho/TLE family. Interacts with HES1.

It is found in the nucleus. Does not bind DNA itself but suppresses both HES1-mediated N box-dependent transcriptional repression and binding of HES1 to E box sequences. Also suppresses HES1-mediated inhibition of the heterodimer formed by ASCL1/MASH1 and TCF3/E47, allowing ASCL1 and TCF3 to up-regulate transcription in its presence. Promotes cell differentiation. The protein is Transcription cofactor HES-6 of Homo sapiens (Human).